The following is a 511-amino-acid chain: Bifunctional purine biosynthesis protein PurH (511 aa).

An MGS-like domain is found at 1-145 (MKKRALVSVS…KNHQFVSVIV (145 aa)).

It belongs to the PurH family.

The enzyme catalyses (6R)-10-formyltetrahydrofolate + 5-amino-1-(5-phospho-beta-D-ribosyl)imidazole-4-carboxamide = 5-formamido-1-(5-phospho-D-ribosyl)imidazole-4-carboxamide + (6S)-5,6,7,8-tetrahydrofolate. It catalyses the reaction IMP + H2O = 5-formamido-1-(5-phospho-D-ribosyl)imidazole-4-carboxamide. It functions in the pathway purine metabolism; IMP biosynthesis via de novo pathway; 5-formamido-1-(5-phospho-D-ribosyl)imidazole-4-carboxamide from 5-amino-1-(5-phospho-D-ribosyl)imidazole-4-carboxamide (10-formyl THF route): step 1/1. The protein operates within purine metabolism; IMP biosynthesis via de novo pathway; IMP from 5-formamido-1-(5-phospho-D-ribosyl)imidazole-4-carboxamide: step 1/1. This chain is Bifunctional purine biosynthesis protein PurH, found in Bacillus cereus (strain G9842).